A 180-amino-acid polypeptide reads, in one-letter code: Endoribonuclease YbeY (180 aa).

Zn(2+) contacts are provided by His118, His122, and His128.

This sequence belongs to the endoribonuclease YbeY family. The cofactor is Zn(2+).

It localises to the cytoplasm. Functionally, single strand-specific metallo-endoribonuclease involved in late-stage 70S ribosome quality control and in maturation of the 3' terminus of the 16S rRNA. This chain is Endoribonuclease YbeY, found in Rhodococcus erythropolis (strain PR4 / NBRC 100887).